The chain runs to 128 residues: Cytochrome c-type biogenesis protein CcmE (128 aa).

The Cytoplasmic segment spans residues 1–7 (MKKKHKR). A helical; Signal-anchor for type II membrane protein membrane pass occupies residues 8–28 (LLVASGIFFFLNCIVFFILTI). Over 29-128 (LRENISFFYT…KHDENYMPRK (100 aa)) the chain is Extracellular. The heme site is built by H120 and Y124.

It belongs to the CcmE/CycJ family.

It localises to the cell membrane. Its function is as follows. Heme chaperone required for the biogenesis of c-type cytochromes. Transiently binds heme delivered by CcmC and transfers the heme to apo-cytochromes in a process facilitated by CcmF and CcmH. This is Cytochrome c-type biogenesis protein CcmE from Wolbachia sp. subsp. Brugia malayi (strain TRS).